We begin with the raw amino-acid sequence, 333 residues long: Glyceraldehyde-3-phosphate dehydrogenase (333 aa).

Residues 11–12 (RI), D35, M79, and S121 each bind NAD(+). D-glyceraldehyde 3-phosphate contacts are provided by residues 150–152 (SCT), T181, 210–211 (TG), and R233. The active-site Nucleophile is the C151. Residue N315 coordinates NAD(+).

This sequence belongs to the glyceraldehyde-3-phosphate dehydrogenase family. Homotetramer.

The protein localises to the cytoplasm. The catalysed reaction is D-glyceraldehyde 3-phosphate + phosphate + NAD(+) = (2R)-3-phospho-glyceroyl phosphate + NADH + H(+). It participates in carbohydrate degradation; glycolysis; pyruvate from D-glyceraldehyde 3-phosphate: step 1/5. Functionally, catalyzes the oxidative phosphorylation of glyceraldehyde 3-phosphate (G3P) to 1,3-bisphosphoglycerate (BPG) using the cofactor NAD. The first reaction step involves the formation of a hemiacetal intermediate between G3P and a cysteine residue, and this hemiacetal intermediate is then oxidized to a thioester, with concomitant reduction of NAD to NADH. The reduced NADH is then exchanged with the second NAD, and the thioester is attacked by a nucleophilic inorganic phosphate to produce BPG. The protein is Glyceraldehyde-3-phosphate dehydrogenase (gap) of Bacteroides fragilis (strain YCH46).